A 146-amino-acid polypeptide reads, in one-letter code: Hemoglobin subunit beta (146 aa).

Valine 1 carries the N-acetylvaline modification. Residues 2–146 enclose the Globin domain; it reads HLTGEEKSAV…VANALAHKYH (145 aa). Threonine 12 is subject to Phosphothreonine. At serine 44 the chain carries Phosphoserine. An N6-acetyllysine modification is found at lysine 59. Histidine 63 serves as a coordination point for heme b. Lysine 82 bears the N6-acetyllysine mark. Histidine 92 is a binding site for heme b. Cysteine 93 carries the S-nitrosocysteine modification. Lysine 144 bears the N6-acetyllysine mark.

The protein belongs to the globin family. As to quaternary structure, heterotetramer of two alpha chains and two beta chains. As to expression, red blood cells.

Functionally, involved in oxygen transport from the lung to the various peripheral tissues. This chain is Hemoglobin subunit beta (HBB), found in Nycticebus coucang (Slow loris).